A 278-amino-acid chain; its full sequence is Acetyl-coenzyme A carboxylase carboxyl transferase subunit beta (278 aa).

Positions 23–278 constitute a CoA carboxyltransferase N-terminal domain; sequence LWSKCDSCGA…QLIKLLGHMK (256 aa). Positions 27, 30, 46, and 49 each coordinate Zn(2+). Residues 27 to 49 form a C4-type zinc finger; it reads CDSCGAALHKKQLEDHLYTCPHC.

The protein belongs to the AccD/PCCB family. In terms of assembly, acetyl-CoA carboxylase is a heterohexamer composed of biotin carboxyl carrier protein (AccB), biotin carboxylase (AccC) and two subunits each of ACCase subunit alpha (AccA) and ACCase subunit beta (AccD). Requires Zn(2+) as cofactor.

The protein localises to the cytoplasm. The catalysed reaction is N(6)-carboxybiotinyl-L-lysyl-[protein] + acetyl-CoA = N(6)-biotinyl-L-lysyl-[protein] + malonyl-CoA. It functions in the pathway lipid metabolism; malonyl-CoA biosynthesis; malonyl-CoA from acetyl-CoA: step 1/1. Component of the acetyl coenzyme A carboxylase (ACC) complex. Biotin carboxylase (BC) catalyzes the carboxylation of biotin on its carrier protein (BCCP) and then the CO(2) group is transferred by the transcarboxylase to acetyl-CoA to form malonyl-CoA. The polypeptide is Acetyl-coenzyme A carboxylase carboxyl transferase subunit beta (Chlorobaculum tepidum (strain ATCC 49652 / DSM 12025 / NBRC 103806 / TLS) (Chlorobium tepidum)).